Here is a 151-residue protein sequence, read N- to C-terminus: Large ribosomal subunit protein bL9 (151 aa).

Belongs to the bacterial ribosomal protein bL9 family.

In terms of biological role, binds to the 23S rRNA. The sequence is that of Large ribosomal subunit protein bL9 from Bordetella petrii (strain ATCC BAA-461 / DSM 12804 / CCUG 43448).